The chain runs to 169 residues: Peptide deformylase (169 aa).

Fe cation is bound by residues C92 and H134. E135 is a catalytic residue. A Fe cation-binding site is contributed by H138.

The protein belongs to the polypeptide deformylase family. Requires Fe(2+) as cofactor.

It catalyses the reaction N-terminal N-formyl-L-methionyl-[peptide] + H2O = N-terminal L-methionyl-[peptide] + formate. Functionally, removes the formyl group from the N-terminal Met of newly synthesized proteins. Requires at least a dipeptide for an efficient rate of reaction. N-terminal L-methionine is a prerequisite for activity but the enzyme has broad specificity at other positions. This Cellvibrio japonicus (strain Ueda107) (Pseudomonas fluorescens subsp. cellulosa) protein is Peptide deformylase.